The primary structure comprises 495 residues: Hydroxyneurosporene desaturase (495 aa).

The protein belongs to the carotenoid/retinoid oxidoreductase family.

The catalysed reaction is rhodopin + A = (3E)-3,4-didehydrorhodopin + AH2. It participates in carotenoid biosynthesis; spheroidene biosynthesis. Functionally, catalyzes the introduction of C-3,4 double bonds into 1-hydroxyneurosporene (1-HO-Neu) to yield demethylspheroidene (DMS). It prefer the acyclic carotenoids such as 1-hydroxylycopene, and 1-hydroxy-gamma-carotene, whereas 1-hydroxy-3,4-didehydrolycopene and 1,1-dihydroxylycopene are much less effective. The protein is Hydroxyneurosporene desaturase (crtD) of Cereibacter sphaeroides (strain ATCC 17023 / DSM 158 / JCM 6121 / CCUG 31486 / LMG 2827 / NBRC 12203 / NCIMB 8253 / ATH 2.4.1.) (Rhodobacter sphaeroides).